The primary structure comprises 185 residues: MIDEILFEAEERMTATVEHTREDLTTIRTGRANPAMFNGVMAEYYGVPTPITQMSSISVPEPRMLLIKPYEMSSMQVIENAIRNSDLGVNPTNDGQVLRVTIPQLTEERRKDMVKLAKGKGEDGKIAIRNIRRKGMDQLKKLQKDGDAGEDEVQAAEKELDKVTAGFVAQVDEVVARKEKELMEV.

Belongs to the RRF family.

The protein localises to the cytoplasm. In terms of biological role, responsible for the release of ribosomes from messenger RNA at the termination of protein biosynthesis. May increase the efficiency of translation by recycling ribosomes from one round of translation to another. The chain is Ribosome-recycling factor from Corynebacterium glutamicum (strain R).